The sequence spans 453 residues: UDP-glycosyltransferase 74E1 (453 aa).

Residues serine 279, 332 to 334 (SPQ), 349 to 357 (HCGWNSTLE), and 371 to 374 (WADQ) each bind UDP-alpha-D-glucose.

This sequence belongs to the UDP-glycosyltransferase family.

The sequence is that of UDP-glycosyltransferase 74E1 (UGT74E1) from Arabidopsis thaliana (Mouse-ear cress).